The sequence spans 207 residues: Thiamine-phosphate synthase (207 aa).

4-amino-2-methyl-5-(diphosphooxymethyl)pyrimidine is bound by residues 35-39 (QYRDK) and N67. The Mg(2+) site is built by D68 and D86. Residue T105 coordinates 4-amino-2-methyl-5-(diphosphooxymethyl)pyrimidine. Residue 132–134 (SVT) participates in 2-[(2R,5Z)-2-carboxy-4-methylthiazol-5(2H)-ylidene]ethyl phosphate binding. Residue K135 coordinates 4-amino-2-methyl-5-(diphosphooxymethyl)pyrimidine. A 2-[(2R,5Z)-2-carboxy-4-methylthiazol-5(2H)-ylidene]ethyl phosphate-binding site is contributed by G162.

Belongs to the thiamine-phosphate synthase family. It depends on Mg(2+) as a cofactor.

The enzyme catalyses 2-[(2R,5Z)-2-carboxy-4-methylthiazol-5(2H)-ylidene]ethyl phosphate + 4-amino-2-methyl-5-(diphosphooxymethyl)pyrimidine + 2 H(+) = thiamine phosphate + CO2 + diphosphate. The catalysed reaction is 2-(2-carboxy-4-methylthiazol-5-yl)ethyl phosphate + 4-amino-2-methyl-5-(diphosphooxymethyl)pyrimidine + 2 H(+) = thiamine phosphate + CO2 + diphosphate. It carries out the reaction 4-methyl-5-(2-phosphooxyethyl)-thiazole + 4-amino-2-methyl-5-(diphosphooxymethyl)pyrimidine + H(+) = thiamine phosphate + diphosphate. Its pathway is cofactor biosynthesis; thiamine diphosphate biosynthesis; thiamine phosphate from 4-amino-2-methyl-5-diphosphomethylpyrimidine and 4-methyl-5-(2-phosphoethyl)-thiazole: step 1/1. In terms of biological role, condenses 4-methyl-5-(beta-hydroxyethyl)thiazole monophosphate (THZ-P) and 2-methyl-4-amino-5-hydroxymethyl pyrimidine pyrophosphate (HMP-PP) to form thiamine monophosphate (TMP). This is Thiamine-phosphate synthase from Pseudomonas putida (strain GB-1).